The following is a 338-amino-acid chain: Ketol-acid reductoisomerase (NADP(+)) (338 aa).

The KARI N-terminal Rossmann domain occupies 1 to 181; it reads MKVFYDKDAD…GGGRAGIIET (181 aa). NADP(+) is bound by residues 24–27, Arg-47, and Ser-52; that span reads YGSQ. His-107 is an active-site residue. Gly-133 provides a ligand contact to NADP(+). Residues 182 to 327 enclose the KARI C-terminal knotted domain; it reads NFREETETDL…AKLRAMMPWI (146 aa). Residues Asp-190, Glu-194, Glu-226, and Glu-230 each contribute to the Mg(2+) site. Residue Ser-251 participates in substrate binding.

This sequence belongs to the ketol-acid reductoisomerase family. Mg(2+) is required as a cofactor.

It catalyses the reaction (2R)-2,3-dihydroxy-3-methylbutanoate + NADP(+) = (2S)-2-acetolactate + NADPH + H(+). It carries out the reaction (2R,3R)-2,3-dihydroxy-3-methylpentanoate + NADP(+) = (S)-2-ethyl-2-hydroxy-3-oxobutanoate + NADPH + H(+). It participates in amino-acid biosynthesis; L-isoleucine biosynthesis; L-isoleucine from 2-oxobutanoate: step 2/4. The protein operates within amino-acid biosynthesis; L-valine biosynthesis; L-valine from pyruvate: step 2/4. Functionally, involved in the biosynthesis of branched-chain amino acids (BCAA). Catalyzes an alkyl-migration followed by a ketol-acid reduction of (S)-2-acetolactate (S2AL) to yield (R)-2,3-dihydroxy-isovalerate. In the isomerase reaction, S2AL is rearranged via a Mg-dependent methyl migration to produce 3-hydroxy-3-methyl-2-ketobutyrate (HMKB). In the reductase reaction, this 2-ketoacid undergoes a metal-dependent reduction by NADPH to yield (R)-2,3-dihydroxy-isovalerate. The chain is Ketol-acid reductoisomerase (NADP(+)) from Cupriavidus necator (strain ATCC 17699 / DSM 428 / KCTC 22496 / NCIMB 10442 / H16 / Stanier 337) (Ralstonia eutropha).